Here is a 262-residue protein sequence, read N- to C-terminus: MNKFLIIDGLNLVRRIYAAIPDENDMESLKERVTSACTKLLRVHHPSHIAIVWDGDEISWRKQLYPDYKKGRKPMPEPLAQGLRALQEHLATLNIASIYAAAEADDVIATLAVKTAKAQGEAIIVSTDKGFSQLNHPRITQWDHFNQQYLDIAALEQKLGVDRSQFLDLMALAGDSGNKIPGIAGIGPKSAAELLKTFRTLSTLFSSLPNLGAKQAKKLAEGKEMARLSYKLAQLQTDLPLNINLKDFRANSTPHPAPNIEQ.

Aspartate 105 is a Mg(2+) binding site. The 88-residue stretch at 164–251 (SQFLDLMALA…NINLKDFRAN (88 aa)) folds into the 5'-3' exonuclease domain. 5 residues coordinate K(+): leucine 172, alanine 173, proline 181, isoleucine 183, and isoleucine 186. The tract at residues 185 to 190 (GIGPKS) is interaction with DNA.

Belongs to the Xni family. It depends on Mg(2+) as a cofactor. The cofactor is K(+).

Its function is as follows. Has flap endonuclease activity. During DNA replication, flap endonucleases cleave the 5'-overhanging flap structure that is generated by displacement synthesis when DNA polymerase encounters the 5'-end of a downstream Okazaki fragment. This Shewanella putrefaciens (strain CN-32 / ATCC BAA-453) protein is Flap endonuclease Xni.